Reading from the N-terminus, the 187-residue chain is Cytochrome b-245 chaperone 1 (187 aa).

Residues 20-42 (GIRSWSLLVGILSTGLAAAYYSG) traverse the membrane as a helical segment. Residues 167-187 (ESPSERSQSSDSEPDGPGGQS) are disordered. Residues serine 168 and serine 170 each carry the phosphoserine modification.

Belongs to the CYBC1 family. As to quaternary structure, interacts with CYBB; CYBC1 may act as a chaperone stabilizing Cytochrome b-245 heterodimer.

It localises to the endoplasmic reticulum membrane. Its function is as follows. Functions as a chaperone necessary for a stable expression of the CYBA and CYBB subunits of the cytochrome b-245 heterodimer. Controls the phagocyte respiratory burst and is essential for innate immunity. This Mus musculus (Mouse) protein is Cytochrome b-245 chaperone 1.